Reading from the N-terminus, the 163-residue chain is 2-C-methyl-D-erythritol 2,4-cyclodiphosphate synthase (163 aa).

Asp12 and His14 together coordinate a divalent metal cation. 4-CDP-2-C-methyl-D-erythritol 2-phosphate contacts are provided by residues 12–14 and 38–39; these read DVH and HS. His46 provides a ligand contact to a divalent metal cation. 4-CDP-2-C-methyl-D-erythritol 2-phosphate-binding positions include 60-62, 65-69, 136-139, Phe143, and Arg146; these read DIG, FPDTD, and TTTE.

Belongs to the IspF family. As to quaternary structure, homotrimer. A divalent metal cation serves as cofactor.

The enzyme catalyses 4-CDP-2-C-methyl-D-erythritol 2-phosphate = 2-C-methyl-D-erythritol 2,4-cyclic diphosphate + CMP. It participates in isoprenoid biosynthesis; isopentenyl diphosphate biosynthesis via DXP pathway; isopentenyl diphosphate from 1-deoxy-D-xylulose 5-phosphate: step 4/6. In terms of biological role, involved in the biosynthesis of isopentenyl diphosphate (IPP) and dimethylallyl diphosphate (DMAPP), two major building blocks of isoprenoid compounds. Catalyzes the conversion of 4-diphosphocytidyl-2-C-methyl-D-erythritol 2-phosphate (CDP-ME2P) to 2-C-methyl-D-erythritol 2,4-cyclodiphosphate (ME-CPP) with a corresponding release of cytidine 5-monophosphate (CMP). In Acinetobacter baylyi (strain ATCC 33305 / BD413 / ADP1), this protein is 2-C-methyl-D-erythritol 2,4-cyclodiphosphate synthase.